A 752-amino-acid chain; its full sequence is BCLAF1 and THRAP3 family member 3 (752 aa).

The span at 1–13 (MARSRSRSPRWKQ) shows a compositional bias: basic residues. 3 disordered regions span residues 1 to 114 (MARS…YMPT), 132 to 177 (PTVQ…QMSL), and 190 to 252 (DELR…DPAR). 2 positions are modified to phosphoserine: Ser15 and Ser17. Positions 23 to 57 (FEYHEERHFHGHYDPEYRHDQQRPFTWRMDDEKHG) are enriched in basic and acidic residues. Ser78 and Ser80 each carry phosphoserine. The segment covering 85–109 (PVEKFDTYKPHQEYFPGRGDDDRRS) has biased composition (basic and acidic residues). The segment covering 190–199 (DELRHQRVQE) has biased composition (basic and acidic residues). Ser205 carries the post-translational modification Phosphoserine. Basic and acidic residues-rich tracts occupy residues 222-231 (RYPEDHDFRK) and 238-252 (RPTD…DPAR). Lys416 is covalently cross-linked (Glycyl lysine isopeptide (Lys-Gly) (interchain with G-Cter in SUMO2)). Ser592 is modified (phosphoserine).

Belongs to the BCLAF1/THRAP3 family.

It localises to the mitochondrion. The sequence is that of BCLAF1 and THRAP3 family member 3 from Mus musculus (Mouse).